Reading from the N-terminus, the 313-residue chain is Ribosomal RNA small subunit methyltransferase H (313 aa).

S-adenosyl-L-methionine is bound by residues Gly-35–His-37, Asp-55, Phe-80, Asp-102, and Gln-109.

This sequence belongs to the methyltransferase superfamily. RsmH family.

The protein resides in the cytoplasm. The enzyme catalyses cytidine(1402) in 16S rRNA + S-adenosyl-L-methionine = N(4)-methylcytidine(1402) in 16S rRNA + S-adenosyl-L-homocysteine + H(+). In terms of biological role, specifically methylates the N4 position of cytidine in position 1402 (C1402) of 16S rRNA. This chain is Ribosomal RNA small subunit methyltransferase H, found in Shewanella baltica (strain OS223).